Reading from the N-terminus, the 52-residue chain is Light-harvesting protein B800/830/1020 alpha-1 chain (52 aa).

Residues 1 to 12 (MWRIWKVFDPRR) are Cytoplasmic-facing. Residues 13–33 (ILIATAIWLIIIALTIHVILM) traverse the membrane as a helical segment. His29 provides a ligand contact to a bacteriochlorophyll. Residues 34–52 (TTERFNWLEGAPAAEYYSS) lie on the Periplasmic side of the membrane.

This sequence belongs to the antenna complex alpha subunit family. In terms of assembly, the core complex is formed by different alpha and beta chains, binding bacteriochlorophyll molecules, and arranged most probably in tetrameric structures disposed around the reaction center. The non-pigmented gamma chains may constitute additional components.

It localises to the cell inner membrane. Antenna complexes are light-harvesting systems, which transfer the excitation energy to the reaction centers. The polypeptide is Light-harvesting protein B800/830/1020 alpha-1 chain (Halorhodospira halochloris (Ectothiorhodospira halochloris)).